We begin with the raw amino-acid sequence, 399 residues long: MARRLQDELSAFFFEYDTPRMVLVRNKKVGVIFRLIQLVVLVYVIGWVFVYEKGYQTSSDLISSVSVKLKGLAVTQLQGLGPQVWDVADYVFPAHGDSSFVVMTNFIVTPQQTQGHCAENPEGGICQDDSGCTPGKAERKAQGIRTGNCVPFNGTVKTCEIFGWCPVEVDDKIPSPALLREAENFTLFIKNSISFPRFKVNRRNLVEEVNGTYMKKCLYHKIQHPLCPVFNLGYVVRESGQDFRSLAEKGGVVGITIDWKCDLDWHVRHCKPIYQFHGLYGEKNLSPGFNFRFARHFVQNGTNRRHLFKVFGIHFDILVDGKAGKFDIIPTMTTIGSGIGIFGVATVLCDLLLLHILPKRHYYKQKKFKYAEDMGPGEGEHDPVATSSTLGLQENMRTS.

Residues Met-1–Lys-28 lie on the Cytoplasmic side of the membrane. A helical membrane pass occupies residues Val-29–Val-50. The Extracellular segment spans residues Tyr-51–Gly-338. The CTP site is built by Lys-68, Lys-70, and Lys-140. Lys-70 is a binding site for ATP. Cystine bridges form between Cys-117–Cys-165, Cys-126–Cys-149, and Cys-132–Cys-159. N-linked (GlcNAc...) asparagine glycans are attached at residues Asn-153 and Asn-184. Thr-186 is a binding site for CTP. Thr-186 provides a ligand contact to ATP. Asn-210 is a glycosylation site (N-linked (GlcNAc...) asparagine). 2 disulfide bridges follow: Cys-217–Cys-227 and Cys-261–Cys-270. 3 residues coordinate ATP: Ser-286, Asn-290, and Arg-292. Asn-290 and Arg-292 together coordinate CTP. N-linked (GlcNAc...) asparagine glycosylation occurs at Asn-300. Lys-309 serves as a coordination point for CTP. Lys-309 provides a ligand contact to ATP. The interval Thr-331 to Gly-338 is pore-forming motif. Residues Ile-339–Pro-358 traverse the membrane as a helical segment. Over Lys-359–Ser-399 the chain is Cytoplasmic. The disordered stretch occupies residues Met-374–Ser-399. A compositionally biased stretch (polar residues) spans Ala-385–Ser-399. Phosphoserine is present on residues Ser-387 and Ser-388. At Thr-389 the chain carries Phosphothreonine.

It belongs to the P2X receptor family. In terms of assembly, functional P2XRs are organized as homomeric and heteromeric trimers. Homotrimer. Forms heterodimer with P2RX2. Forms heterodimer with P2RX4. Forms heterodimer with P2RX5. As to expression, high levels in vas deferens and urinary bladder. Lower extent in spinal cord, coeliac ganglion, lung and spleen (probably in the smooth muscle part of both organs).

The protein resides in the cell membrane. It carries out the reaction Ca(2+)(in) = Ca(2+)(out). It catalyses the reaction K(+)(in) = K(+)(out). The enzyme catalyses Na(+)(in) = Na(+)(out). With respect to regulation, activated by low concentrations of ATP (&lt;1 uM). Undergoes rapid desensitisation. Sensitives to the ATP agonist:alpha/beta-methylene-ATP. Modulated by cholesterol. Its function is as follows. ATP-gated nonselective transmembrane cation channel permeable to potassium, sodium and with relatively high calcium permeability. Furthermore, CTP functions as a weak affinity agonist for P2RX1. Plays a role a role in urogenital, immune and cardiovascular function. Specifically, plays an important role in neurogenic contraction of smooth muscle of the vas deferens, and therefore is essential for normal male reproductive function. In addition, contributes to smooth muscle contractions of the urinary bladder. On platelets, contributes to platelet activation and aggregation and thereby, also to thrombosis. On neutrophils, it is involved in chemotaxis and in mitigating the activation of circulating cells. The protein is P2X purinoceptor 1 (P2rx1) of Rattus norvegicus (Rat).